The primary structure comprises 544 residues: GMP synthase [glutamine-hydrolyzing] (544 aa).

The 199-residue stretch at 12-210 folds into the Glutamine amidotransferase type-1 domain; it reads TILILDFGSQ…VKNVCSVRDG (199 aa). Cys88 acts as the Nucleophile in catalysis. Active-site residues include His184 and Glu186. Residues 211 to 419 enclose the GMPS ATP-PPase domain; sequence WSMESFIPKE…LNIPEHLVGR (209 aa). Residue 239 to 245 participates in ATP binding; sequence SGGVDST. Positions 312, 481, 536, and 542 each coordinate XMP.

As to quaternary structure, homodimer. Also forms a small population of homotetramers. It depends on Mg(2+) as a cofactor.

The protein resides in the cytoplasm. Its subcellular location is the cytosol. The enzyme catalyses XMP + L-glutamine + ATP + H2O = GMP + L-glutamate + AMP + diphosphate + 2 H(+). Its pathway is purine metabolism; GMP biosynthesis; GMP from XMP (L-Gln route): step 1/1. Catalyzes the conversion of xanthine monophosphate (XMP) to GMP in the presence of glutamine and ATP through an adenyl-XMP intermediate. This is GMP synthase [glutamine-hydrolyzing] from Cryptococcus neoformans var. neoformans serotype D (strain JEC21 / ATCC MYA-565) (Filobasidiella neoformans).